A 277-amino-acid polypeptide reads, in one-letter code: 4-hydroxy-3-methylbut-2-enyl diphosphate reductase (277 aa).

A [4Fe-4S] cluster-binding site is contributed by Cys-12. (2E)-4-hydroxy-3-methylbut-2-enyl diphosphate is bound by residues His-36 and His-70. Dimethylallyl diphosphate-binding residues include His-36 and His-70. Positions 36 and 70 each coordinate isopentenyl diphosphate. Cys-92 is a [4Fe-4S] cluster binding site. Residue His-120 participates in (2E)-4-hydroxy-3-methylbut-2-enyl diphosphate binding. His-120 provides a ligand contact to dimethylallyl diphosphate. His-120 provides a ligand contact to isopentenyl diphosphate. Glu-122 functions as the Proton donor in the catalytic mechanism. Residue Thr-160 coordinates (2E)-4-hydroxy-3-methylbut-2-enyl diphosphate. Cys-188 lines the [4Fe-4S] cluster pocket. The (2E)-4-hydroxy-3-methylbut-2-enyl diphosphate site is built by Ser-216, Ser-217, Asn-218, and Ser-260. Ser-216, Ser-217, Asn-218, and Ser-260 together coordinate dimethylallyl diphosphate. Ser-216, Ser-217, Asn-218, and Ser-260 together coordinate isopentenyl diphosphate.

Belongs to the IspH family. Requires [4Fe-4S] cluster as cofactor.

The enzyme catalyses isopentenyl diphosphate + 2 oxidized [2Fe-2S]-[ferredoxin] + H2O = (2E)-4-hydroxy-3-methylbut-2-enyl diphosphate + 2 reduced [2Fe-2S]-[ferredoxin] + 2 H(+). The catalysed reaction is dimethylallyl diphosphate + 2 oxidized [2Fe-2S]-[ferredoxin] + H2O = (2E)-4-hydroxy-3-methylbut-2-enyl diphosphate + 2 reduced [2Fe-2S]-[ferredoxin] + 2 H(+). The protein operates within isoprenoid biosynthesis; dimethylallyl diphosphate biosynthesis; dimethylallyl diphosphate from (2E)-4-hydroxy-3-methylbutenyl diphosphate: step 1/1. It participates in isoprenoid biosynthesis; isopentenyl diphosphate biosynthesis via DXP pathway; isopentenyl diphosphate from 1-deoxy-D-xylulose 5-phosphate: step 6/6. Functionally, catalyzes the conversion of 1-hydroxy-2-methyl-2-(E)-butenyl 4-diphosphate (HMBPP) into a mixture of isopentenyl diphosphate (IPP) and dimethylallyl diphosphate (DMAPP). Acts in the terminal step of the DOXP/MEP pathway for isoprenoid precursor biosynthesis. The chain is 4-hydroxy-3-methylbut-2-enyl diphosphate reductase from Sulfurovum sp. (strain NBC37-1).